The primary structure comprises 557 residues: Urocanate hydratase (557 aa).

The interval 1 to 20 (MSNPRHNEREVRSPRGDELN) is disordered. NAD(+)-binding positions include 52 to 53 (GG), Q130, 176 to 178 (GMG), E196, R201, 242 to 243 (NA), 263 to 267 (QTSAH), 273 to 274 (YL), and Y322. Residue C410 is part of the active site. G492 serves as a coordination point for NAD(+).

The protein belongs to the urocanase family. Requires NAD(+) as cofactor.

The protein resides in the cytoplasm. The catalysed reaction is 4-imidazolone-5-propanoate = trans-urocanate + H2O. It functions in the pathway amino-acid degradation; L-histidine degradation into L-glutamate; N-formimidoyl-L-glutamate from L-histidine: step 2/3. Catalyzes the conversion of urocanate to 4-imidazolone-5-propionate. This Brucella ovis (strain ATCC 25840 / 63/290 / NCTC 10512) protein is Urocanate hydratase.